Reading from the N-terminus, the 630-residue chain is Chaperone protein HtpG (630 aa).

Residues 1–341 (MTQNATSETL…SADLPLNVSR (341 aa)) form an a; substrate-binding region. The segment at 342–558 (EILQESRDVR…QNDLSPHLLR (217 aa)) is b. A c region spans residues 559–630 (MLKAAGQEVP…KRLNALLLKV (72 aa)).

It belongs to the heat shock protein 90 family. In terms of assembly, homodimer.

The protein localises to the cytoplasm. Molecular chaperone. Has ATPase activity. This chain is Chaperone protein HtpG, found in Bordetella avium (strain 197N).